Here is a 212-residue protein sequence, read N- to C-terminus: Thymidylate kinase (212 aa).

ATP is bound at residue 11 to 18; it reads GPEGAGKT.

Belongs to the thymidylate kinase family.

It carries out the reaction dTMP + ATP = dTDP + ADP. Its function is as follows. Phosphorylation of dTMP to form dTDP in both de novo and salvage pathways of dTTP synthesis. The protein is Thymidylate kinase of Streptococcus pneumoniae (strain Hungary19A-6).